A 185-amino-acid chain; its full sequence is dCTP deaminase (185 aa).

DCTP-binding positions include Lys107 to Arg112, Thr131 to Glu133, Gln152, Tyr166, and Gln176. Glu133 functions as the Proton donor/acceptor in the catalytic mechanism.

The protein belongs to the dCTP deaminase family. In terms of assembly, homotrimer.

It catalyses the reaction dCTP + H2O + H(+) = dUTP + NH4(+). It functions in the pathway pyrimidine metabolism; dUMP biosynthesis; dUMP from dCTP (dUTP route): step 1/2. Its function is as follows. Catalyzes the deamination of dCTP to dUTP. In Wolbachia pipientis wMel, this protein is dCTP deaminase.